Here is a 481-residue protein sequence, read N- to C-terminus: tRNA sulfurtransferase (481 aa).

Residues 54 to 156 enclose the THUMP domain; sequence ADGDGPLRHI…GKDVFFYHEI (103 aa). ATP is bound by residues 174–175, Lys256, Gly278, and Gln287; that span reads LV. A disulfide bond links Cys334 and Cys433. The 76-residue stretch at 388–463 folds into the Rhodanese domain; sequence IPKDAVIIDL…YYSTFSDLKK (76 aa). The Cysteine persulfide intermediate role is filled by Cys433.

It belongs to the ThiI family.

The protein localises to the cytoplasm. The enzyme catalyses [ThiI sulfur-carrier protein]-S-sulfanyl-L-cysteine + a uridine in tRNA + 2 reduced [2Fe-2S]-[ferredoxin] + ATP + H(+) = [ThiI sulfur-carrier protein]-L-cysteine + a 4-thiouridine in tRNA + 2 oxidized [2Fe-2S]-[ferredoxin] + AMP + diphosphate. The catalysed reaction is [ThiS sulfur-carrier protein]-C-terminal Gly-Gly-AMP + S-sulfanyl-L-cysteinyl-[cysteine desulfurase] + AH2 = [ThiS sulfur-carrier protein]-C-terminal-Gly-aminoethanethioate + L-cysteinyl-[cysteine desulfurase] + A + AMP + 2 H(+). The protein operates within cofactor biosynthesis; thiamine diphosphate biosynthesis. Functionally, catalyzes the ATP-dependent transfer of a sulfur to tRNA to produce 4-thiouridine in position 8 of tRNAs, which functions as a near-UV photosensor. Also catalyzes the transfer of sulfur to the sulfur carrier protein ThiS, forming ThiS-thiocarboxylate. This is a step in the synthesis of thiazole, in the thiamine biosynthesis pathway. The sulfur is donated as persulfide by IscS. The chain is tRNA sulfurtransferase from Thermoplasma acidophilum (strain ATCC 25905 / DSM 1728 / JCM 9062 / NBRC 15155 / AMRC-C165).